The chain runs to 180 residues: Endogenous alpha-amylase/subtilisin inhibitor (180 aa).

Intrachain disulfides connect cysteine 42–cysteine 89 and cysteine 143–cysteine 147.

The protein belongs to the protease inhibitor I3 (leguminous Kunitz-type inhibitor) family.

Functionally, inhibitor of endogenous alpha-amylase (wheat also produces an exogenous inhibitor which inactivates alpha-amylase from animal and insect origin). This inhibitor can also inhibit subtilisin. The polypeptide is Endogenous alpha-amylase/subtilisin inhibitor (Triticum aestivum (Wheat)).